We begin with the raw amino-acid sequence, 243 residues long: 1-(5-phosphoribosyl)-5-[(5-phosphoribosylamino)methylideneamino] imidazole-4-carboxamide isomerase (243 aa).

The active-site Proton acceptor is D17. Residue D138 is the Proton donor of the active site.

This sequence belongs to the HisA/HisF family.

The protein localises to the cytoplasm. It carries out the reaction 1-(5-phospho-beta-D-ribosyl)-5-[(5-phospho-beta-D-ribosylamino)methylideneamino]imidazole-4-carboxamide = 5-[(5-phospho-1-deoxy-D-ribulos-1-ylimino)methylamino]-1-(5-phospho-beta-D-ribosyl)imidazole-4-carboxamide. It functions in the pathway amino-acid biosynthesis; L-histidine biosynthesis; L-histidine from 5-phospho-alpha-D-ribose 1-diphosphate: step 4/9. The chain is 1-(5-phosphoribosyl)-5-[(5-phosphoribosylamino)methylideneamino] imidazole-4-carboxamide isomerase from Deinococcus geothermalis (strain DSM 11300 / CIP 105573 / AG-3a).